The following is a 336-amino-acid chain: Large ribosomal subunit protein uL10 (336 aa).

The segment at 292–336 is disordered; the sequence is LKEKLSSRAAAPAPEEKEEEVEEEAEEEEEEEEEDAAAGLGALFG. The span at 307–327 shows a compositional bias: acidic residues; that stretch reads EKEEEVEEEAEEEEEEEEEDA.

Belongs to the universal ribosomal protein uL10 family. In terms of assembly, part of the 50S ribosomal subunit. Forms part of the ribosomal stalk which helps the ribosome interact with GTP-bound translation factors. Forms a heptameric L10(L12)2(L12)2(L12)2 complex, where L10 forms an elongated spine to which the L12 dimers bind in a sequential fashion.

Its function is as follows. Forms part of the ribosomal stalk, playing a central role in the interaction of the ribosome with GTP-bound translation factors. This is Large ribosomal subunit protein uL10 from Methanothermobacter thermautotrophicus (strain ATCC 29096 / DSM 1053 / JCM 10044 / NBRC 100330 / Delta H) (Methanobacterium thermoautotrophicum).